The chain runs to 362 residues: D-alanine--D-alanine ligase (362 aa).

The 212-residue stretch at 134-345 (KILAQRAGVP…YPDLITRLIR (212 aa)) folds into the ATP-grasp domain. 170-225 (GQLGTSNLFVKPSNQGSSVGITHVTDDSNYAEALAEAFKYDDKVLVEEGIVGTEVE) serves as a coordination point for ATP. Residues aspartate 298, glutamate 312, and asparagine 314 each contribute to the Mg(2+) site.

The protein belongs to the D-alanine--D-alanine ligase family. Mg(2+) serves as cofactor. Requires Mn(2+) as cofactor.

The protein resides in the cytoplasm. It catalyses the reaction 2 D-alanine + ATP = D-alanyl-D-alanine + ADP + phosphate + H(+). Its pathway is cell wall biogenesis; peptidoglycan biosynthesis. Its function is as follows. Cell wall formation. This chain is D-alanine--D-alanine ligase, found in Lactobacillus delbrueckii subsp. bulgaricus (strain ATCC BAA-365 / Lb-18).